The primary structure comprises 281 residues: MKHPFSRFFSFGEKEQEETMEKQEKEEVRKIPVSKIVPNRFQPRTIFDEEKIEELALTIHTHGIIQPIVVRECEDGKFEIIAGERRWRAVQKLGWSEIPAIIKNLNDKETASVALIENLQREELTPIEEAMAYAKLLELHNLTQEALAQRLGKGQSTIANKLRLLKLPQEVQEALLHRTITERHARALIVLKDKEKQLKLLQEIIDKQLNVKQTEDRVLKMLEAANPKPKPKRKAFSKDMRIAVNTIRQSLTMVANSGVAVDSEEEEFEDYYQITIRIPKK.

Residues 145-164 (EALAQRLGKGQSTIANKLRL) constitute a DNA-binding region (H-T-H motif).

The protein belongs to the ParB family.

The protein localises to the cytoplasm. The protein resides in the nucleoid. In terms of biological role, effects nucleoid occlusion by binding relatively nonspecifically to DNA and preventing the assembly of the division machinery in the vicinity of the nucleoid, especially under conditions that disturb the cell cycle. It helps to coordinate cell division and chromosome segregation by preventing the formation of the Z ring through the nucleoid, which would cause chromosome breakage. The chain is Nucleoid occlusion protein from Geobacillus sp. (strain WCH70).